The primary structure comprises 165 residues: Crossover junction endodeoxyribonuclease RuvC (165 aa).

Active-site residues include D7, E67, and D140. 3 residues coordinate Mg(2+): D7, E67, and D140.

The protein belongs to the RuvC family. In terms of assembly, homodimer which binds Holliday junction (HJ) DNA. The HJ becomes 2-fold symmetrical on binding to RuvC with unstacked arms; it has a different conformation from HJ DNA in complex with RuvA. In the full resolvosome a probable DNA-RuvA(4)-RuvB(12)-RuvC(2) complex forms which resolves the HJ. Requires Mg(2+) as cofactor.

The protein resides in the cytoplasm. It catalyses the reaction Endonucleolytic cleavage at a junction such as a reciprocal single-stranded crossover between two homologous DNA duplexes (Holliday junction).. In terms of biological role, the RuvA-RuvB-RuvC complex processes Holliday junction (HJ) DNA during genetic recombination and DNA repair. Endonuclease that resolves HJ intermediates. Cleaves cruciform DNA by making single-stranded nicks across the HJ at symmetrical positions within the homologous arms, yielding a 5'-phosphate and a 3'-hydroxyl group; requires a central core of homology in the junction. The consensus cleavage sequence is 5'-(A/T)TT(C/G)-3'. Cleavage occurs on the 3'-side of the TT dinucleotide at the point of strand exchange. HJ branch migration catalyzed by RuvA-RuvB allows RuvC to scan DNA until it finds its consensus sequence, where it cleaves and resolves the cruciform DNA. This Dehalococcoides mccartyi (strain ATCC BAA-2266 / KCTC 15142 / 195) (Dehalococcoides ethenogenes (strain 195)) protein is Crossover junction endodeoxyribonuclease RuvC.